Reading from the N-terminus, the 157-residue chain is Ribosome maturation factor RimP (157 aa).

The protein belongs to the RimP family.

It is found in the cytoplasm. In terms of biological role, required for maturation of 30S ribosomal subunits. In Synechococcus sp. (strain CC9311), this protein is Ribosome maturation factor RimP.